The chain runs to 1284 residues: Neuronal cell adhesion molecule (1284 aa).

Positions 1-24 (MMKEKSISASKASLVFFLCQMISA) are cleaved as a signal peptide. The Extracellular segment spans residues 25-1143 (LDVPLDSKLL…ASRQVDIATQ (1119 aa)). 6 Ig-like C2-type domains span residues 41–129 (PTIT…AAIS), 136–230 (PSRS…QPIS), 243–332 (PPVL…ISVT), 337–424 (PYWI…AFVN), 430–517 (PRIL…VQLE), and 521–608 (PTMI…AVLT). 2 disulfides stabilise this stretch: Cys63–Cys118 and Cys162–Cys213. The N-linked (GlcNAc...) asparagine glycan is linked to Asn78. 2 N-linked (GlcNAc...) asparagine glycosylation sites follow: Asn218 and Asn290. 2 disulfides stabilise this stretch: Cys268/Cys316 and Cys358/Cys408. 6 N-linked (GlcNAc...) asparagine glycosylation sites follow: Asn409, Asn483, Asn576, Asn581, Asn595, and Asn692. 2 disulfides stabilise this stretch: Cys452/Cys501 and Cys543/Cys592. 5 consecutive Fibronectin type-III domains span residues 625 to 720 (PPLD…TKSA), 725 to 819 (NPSN…SGED), 824 to 926 (APGN…TPEG), 930 to 1026 (PPSF…IMDE), and 1040 to 1132 (QPLY…TGPA). A compositionally biased stretch (polar residues) spans 707–731 (QPSEPSEQYLTKSANPDENPSNVQG). Positions 707 to 732 (QPSEPSEQYLTKSANPDENPSNVQGI) are disordered. N-linked (GlcNAc...) asparagine glycosylation is found at Asn778, Asn834, Asn885, Asn969, Asn985, Asn995, Asn1048, Asn1059, and Asn1091. Residues 1144-1166 (GWFIGLMCAVALLILILLIVCFI) form a helical membrane-spanning segment. At 1167-1284 (RRNKGGKYPV…SPVNAMNSFV (118 aa)) the chain is on the cytoplasmic side. Composition is skewed to basic and acidic residues over residues 1175 to 1195 (PVKEKEDAHADPEIQPMKEDD), 1202 to 1212 (RSLESDAEDHK), and 1221 to 1230 (PSDRTVKKED). The segment at 1175-1284 (PVKEKEDAHA…SPVNAMNSFV (110 aa)) is disordered. Over residues 1268–1284 (NESSEAPSPVNAMNSFV) the composition is skewed to polar residues.

This sequence belongs to the immunoglobulin superfamily. L1/neurofascin/NgCAM family. Heterodimer of an alpha and a beta chain. Retina and developing brain.

The protein resides in the cell membrane. In terms of biological role, this protein is a cell adhesion molecule involved in neuron-neuron adhesion, neurite fasciculation, outgrowth of neurites, etc. Specifically involved in the development of optic fibres in the retina. In Gallus gallus (Chicken), this protein is Neuronal cell adhesion molecule.